A 311-amino-acid polypeptide reads, in one-letter code: UPF0324 membrane protein VV1_3166 (311 aa).

10 helical membrane passes run Phe8–Leu28, Leu51–Val71, Asp74–Ala94, Leu106–Ile126, Ile133–Val153, Phe165–Ala185, Leu197–Ala217, Leu228–Pro248, Gly256–Ile276, and Leu289–Leu309.

The protein belongs to the UPF0324 family.

Its subcellular location is the cell membrane. In Vibrio vulnificus (strain CMCP6), this protein is UPF0324 membrane protein VV1_3166.